Reading from the N-terminus, the 296-residue chain is Polyamine aminopropyltransferase (296 aa).

Residues glutamate 5–glutamine 238 form the PABS domain. Glutamine 33 contributes to the S-methyl-5'-thioadenosine binding site. Residues histidine 64 and aspartate 88 each contribute to the spermidine site. S-methyl-5'-thioadenosine is bound by residues glutamate 108 and aspartate 140 to glycine 141. Aspartate 158 acts as the Proton acceptor in catalysis. Spermidine is bound at residue aspartate 158–aspartate 161. S-methyl-5'-thioadenosine is bound at residue proline 165.

The protein belongs to the spermidine/spermine synthase family. As to quaternary structure, homodimer or homotetramer.

Its subcellular location is the cytoplasm. It catalyses the reaction S-adenosyl 3-(methylsulfanyl)propylamine + putrescine = S-methyl-5'-thioadenosine + spermidine + H(+). The protein operates within amine and polyamine biosynthesis; spermidine biosynthesis; spermidine from putrescine: step 1/1. Functionally, catalyzes the irreversible transfer of a propylamine group from the amino donor S-adenosylmethioninamine (decarboxy-AdoMet) to putrescine (1,4-diaminobutane) to yield spermidine. The polypeptide is Polyamine aminopropyltransferase (Yersinia pestis bv. Antiqua (strain Antiqua)).